We begin with the raw amino-acid sequence, 159 residues long: 2-C-methyl-D-erythritol 2,4-cyclodiphosphate synthase (159 aa).

Residues Asp-10 and His-12 each contribute to the a divalent metal cation site. 4-CDP-2-C-methyl-D-erythritol 2-phosphate contacts are provided by residues 10 to 12 (DVH) and 36 to 37 (HS). His-44 serves as a coordination point for a divalent metal cation. Residues 58–60 (DIG), 63–67 (FPDTD), 102–108 (AQVPKMA), 134–137 (TTTE), Phe-141, and Arg-144 contribute to the 4-CDP-2-C-methyl-D-erythritol 2-phosphate site.

It belongs to the IspF family. In terms of assembly, homotrimer. It depends on a divalent metal cation as a cofactor.

The catalysed reaction is 4-CDP-2-C-methyl-D-erythritol 2-phosphate = 2-C-methyl-D-erythritol 2,4-cyclic diphosphate + CMP. The protein operates within isoprenoid biosynthesis; isopentenyl diphosphate biosynthesis via DXP pathway; isopentenyl diphosphate from 1-deoxy-D-xylulose 5-phosphate: step 4/6. Functionally, involved in the biosynthesis of isopentenyl diphosphate (IPP) and dimethylallyl diphosphate (DMAPP), two major building blocks of isoprenoid compounds. Catalyzes the conversion of 4-diphosphocytidyl-2-C-methyl-D-erythritol 2-phosphate (CDP-ME2P) to 2-C-methyl-D-erythritol 2,4-cyclodiphosphate (ME-CPP) with a corresponding release of cytidine 5-monophosphate (CMP). This chain is 2-C-methyl-D-erythritol 2,4-cyclodiphosphate synthase, found in Shewanella woodyi (strain ATCC 51908 / MS32).